The following is a 168-amino-acid chain: CS3 fimbrial subunit A (168 aa).

The N-terminal stretch at 1-22 is a signal peptide; sequence MLKIKYLLIGLSLSAMSSYSLA.

A longer minor form, starting at amino acid 15, has been detected by amino acid sequencing. This is probably due to alternative processing of the signal peptide.

It localises to the fimbrium. Functionally, fimbriae (also called pili), polar filaments radiating from the surface of the bacterium to a length of 0.5-1.5 micrometers and numbering 100-300 per cell, enable bacteria to colonize the epithelium of specific host organs. The polypeptide is CS3 fimbrial subunit A (Escherichia coli).